We begin with the raw amino-acid sequence, 237 residues long: Lectin ConGF (237 aa).

Positions 8 and 10 each coordinate Mn(2+). The Ca(2+) site is built by Asp10, Tyr12, Asn14, and Asp19. Asn14 is an a carbohydrate binding site. Residues Asp19 and His24 each coordinate Mn(2+). Residues Leu99, Tyr100, Asp208, and Arg228 each coordinate a carbohydrate.

The protein belongs to the leguminous lectin family. Homotetramer; dimer of dimers. In terms of processing, concanavalin A-like lectins of the Diocleinae subtribe undergo proteolytic processing referred to as circular permutation. The propeptide is split into an N-terminal and a C-terminal part, the gamma and beta chain, respectively. These are then religated in beta-gamma order to form the mature alpha chain. The beta and gamma chains can often be detected in cell extracts. Residues 1-118 of the mature chain, as displayed here, probably constitute the beta chain in the propeptide, residues 119-237 the gamma chain.

Lectin. Induces paw edema in mice. Has a weak vasorelaxant effect on rat aorta. Has anti-inflammatory and anti-nociceptive effects. In Canavalia grandiflora (Jackbean), this protein is Lectin ConGF.